The sequence spans 66 residues: Large ribosomal subunit protein uL29 (66 aa).

Belongs to the universal ribosomal protein uL29 family.

The polypeptide is Large ribosomal subunit protein uL29 (Thermosipho africanus (strain TCF52B)).